A 193-amino-acid polypeptide reads, in one-letter code: Potassium-transporting ATPase KdpC subunit (193 aa).

Residues 8–28 traverse the membrane as a helical segment; sequence VVLLIFLTLITGVAYPLLATG.

Belongs to the KdpC family. As to quaternary structure, the system is composed of three essential subunits: KdpA, KdpB and KdpC.

The protein resides in the cell inner membrane. Part of the high-affinity ATP-driven potassium transport (or Kdp) system, which catalyzes the hydrolysis of ATP coupled with the electrogenic transport of potassium into the cytoplasm. This subunit acts as a catalytic chaperone that increases the ATP-binding affinity of the ATP-hydrolyzing subunit KdpB by the formation of a transient KdpB/KdpC/ATP ternary complex. The chain is Potassium-transporting ATPase KdpC subunit from Photorhabdus laumondii subsp. laumondii (strain DSM 15139 / CIP 105565 / TT01) (Photorhabdus luminescens subsp. laumondii).